The primary structure comprises 216 residues: MOB kinase activator 1A (216 aa).

Ser2 carries the post-translational modification N-acetylserine. Phosphothreonine occurs at positions 12 and 35. Thr74 is subject to Phosphothreonine; by STK3/MST2. Residues Cys79, Cys84, His161, and His166 each coordinate Zn(2+). Thr181 is subject to Phosphothreonine.

It belongs to the MOB1/phocein family. As to quaternary structure, binds STK38 and STK38L. Interacts with LATS1 and LATS2. Forms a tripartite complex with STK38 and STK3/MST2. In terms of processing, phosphorylated by STK3/MST2 and STK4/MST1 and this phosphorylation enhances its binding to LATS1. In terms of tissue distribution, adrenal gland, bone marrow, brain, placenta, prostate, salivary gland, skeletal muscle, testis, thymus, thyroid gland, heart, spinal cord, fetal brain and fetal liver.

Its function is as follows. Activator of LATS1/2 in the Hippo signaling pathway which plays a pivotal role in organ size control and tumor suppression by restricting proliferation and promoting apoptosis. The core of this pathway is composed of a kinase cascade wherein STK3/MST2 and STK4/MST1, in complex with its regulatory protein SAV1, phosphorylates and activates LATS1/2 in complex with its regulatory protein MOB1, which in turn phosphorylates and inactivates YAP1 oncoprotein and WWTR1/TAZ. Phosphorylation of YAP1 by LATS1/2 inhibits its translocation into the nucleus to regulate cellular genes important for cell proliferation, cell death, and cell migration. Stimulates the kinase activity of STK38 and STK38L. Acts cooperatively with STK3/MST2 to activate STK38. In Homo sapiens (Human), this protein is MOB kinase activator 1A.